Consider the following 159-residue polypeptide: Large ribosomal subunit protein uL11 (159 aa).

It belongs to the universal ribosomal protein uL11 family. Part of the ribosomal stalk of the 50S ribosomal subunit. Interacts with L10 and the large rRNA to form the base of the stalk. L10 forms an elongated spine to which L12 dimers bind in a sequential fashion forming a multimeric L10(L12)X complex.

In terms of biological role, forms part of the ribosomal stalk which helps the ribosome interact with GTP-bound translation factors. The polypeptide is Large ribosomal subunit protein uL11 (Methanococcus maripaludis (strain C6 / ATCC BAA-1332)).